A 224-amino-acid chain; its full sequence is Pre-hexon-linking protein VIII (224 aa).

Thr64 carries the phosphothreonine; by host modification. Positions 112-154 are excised as a propeptide; it reads RQLCPSQIGIKSPVLAGTGIQLSEDIPSASWIRPDGIFQLGGG.

Belongs to the adenoviridae hexon-linking protein family. In terms of assembly, interacts with the peripentonal hexons as well as the hexons in the facets. Part of a complex composed of the core-capsid bridging protein, the endosome lysis protein VI and the hexon-linking protein VIII; these interactions bridge the virus core to the capsid. Post-translationally, cleaved by the viral protease during virion maturation. May cause the middle segment to be shed from the capsid.

Its subcellular location is the virion. It is found in the host nucleus. Structural component of the virion that acts as a cement protein on the capsid interior and which glue the peripentonal hexons and group-of-nine hexons together. The polypeptide is Pre-hexon-linking protein VIII (Canis lupus familiaris (Dog)).